Here is an 863-residue protein sequence, read N- to C-terminus: Paramyosin (863 aa).

The interval 1–26 (MSESHVKISRTIIRGTSPSTVRLESP) is nonhelical region. Residues 27–836 (VRELEDLLDL…ERTITIKRTI (810 aa)) adopt a coiled-coil conformation. The tract at residues 837–863 (GGPGSRAVSVVREINSVSRGNRATSIM) is nonhelical region.

This sequence belongs to the paramyosin family. In terms of assembly, homodimer.

It localises to the cytoplasm. Its subcellular location is the myofibril. Its function is as follows. Paramyosin is a major structural component of many thick filaments isolated from invertebrate muscles. This Echinococcus granulosus (Hydatid tapeworm) protein is Paramyosin.